We begin with the raw amino-acid sequence, 225 residues long: NAD(P)H-quinone oxidoreductase subunit K, chloroplastic (225 aa).

The [4Fe-4S] cluster site is built by C43, C44, C108, and C139.

This sequence belongs to the complex I 20 kDa subunit family. As to quaternary structure, NDH is composed of at least 16 different subunits, 5 of which are encoded in the nucleus. It depends on [4Fe-4S] cluster as a cofactor.

The protein localises to the plastid. Its subcellular location is the chloroplast thylakoid membrane. It catalyses the reaction a plastoquinone + NADH + (n+1) H(+)(in) = a plastoquinol + NAD(+) + n H(+)(out). The enzyme catalyses a plastoquinone + NADPH + (n+1) H(+)(in) = a plastoquinol + NADP(+) + n H(+)(out). In terms of biological role, NDH shuttles electrons from NAD(P)H:plastoquinone, via FMN and iron-sulfur (Fe-S) centers, to quinones in the photosynthetic chain and possibly in a chloroplast respiratory chain. The immediate electron acceptor for the enzyme in this species is believed to be plastoquinone. Couples the redox reaction to proton translocation, and thus conserves the redox energy in a proton gradient. This Nandina domestica (Heavenly bamboo) protein is NAD(P)H-quinone oxidoreductase subunit K, chloroplastic.